We begin with the raw amino-acid sequence, 231 residues long: Large ribosomal subunit protein uL1 (231 aa).

This sequence belongs to the universal ribosomal protein uL1 family. As to quaternary structure, part of the 50S ribosomal subunit.

In terms of biological role, binds directly to 23S rRNA. The L1 stalk is quite mobile in the ribosome, and is involved in E site tRNA release. Its function is as follows. Protein L1 is also a translational repressor protein, it controls the translation of the L11 operon by binding to its mRNA. In Pseudomonas entomophila (strain L48), this protein is Large ribosomal subunit protein uL1.